Reading from the N-terminus, the 144-residue chain is MCHAREASPGTGEPEAAPRDNFPRAAGSKRGVGAAFETRAQRFLERAGLALVARNVTVRGGEIDLVMRERDGTLVFVEVRARANSRYGGAAASIGVRKRMRLLLAAHAFWARTGGANACRFDVVAFEGGRLVWLRDAFRADDAG.

Positions 1–28 are disordered; it reads MCHAREASPGTGEPEAAPRDNFPRAAGS.

Belongs to the UPF0102 family.

The polypeptide is UPF0102 protein BMA2801 (Burkholderia mallei (strain ATCC 23344)).